The sequence spans 380 residues: Ankyrin repeat domain-containing protein 63 (380 aa).

ANK repeat units follow at residues 11-40 (AGTRTFLEAMQAGKVHLARFVLDALDRSII), 46-79 (QGRTPLMVAVGLPDPALRARFVRLLLEQGAAVNL), 83-112 (RGRTALSLACERGHLDAVQLLVQFSGDPEA), 116-145 (AGNSPVMWAAACGHGAVLEFLVRSFRRLGL), and 153-182 (AGLTALQLAAARGHGTCVQALTGPWGRAAA). Low complexity-rich tracts occupy residues 181–203 (AAAAAARGSNSDSPPGRPAPAAS) and 216–226 (RPLLARFARAA). The tract at residues 181–256 (AAAAAARGSN…GSERPELGRS (76 aa)) is disordered. At S193 the chain carries Phosphoserine. A Phosphoserine modification is found at S294. The interval 309–368 (PIGLSPHPEGGPGSGRLGLRRRSTAPDIPSLVGEAPGPESGPELEANALSVSVPGPNPWQ) is disordered.

This is Ankyrin repeat domain-containing protein 63 from Homo sapiens (Human).